The sequence spans 262 residues: Phosphonates import ATP-binding protein PhnC (262 aa).

Residues 5–253 (IRVEKLAKTF…RFDHLYRSIN (249 aa)) form the ABC transporter domain. Position 37-44 (37-44 (GPSGSGKS)) interacts with ATP.

This sequence belongs to the ABC transporter superfamily. Phosphonates importer (TC 3.A.1.9.1) family. The complex is composed of two ATP-binding proteins (PhnC), two transmembrane proteins (PhnE) and a solute-binding protein (PhnD).

Its subcellular location is the cell inner membrane. The enzyme catalyses phosphonate(out) + ATP + H2O = phosphonate(in) + ADP + phosphate + H(+). Functionally, part of the ABC transporter complex PhnCDE involved in phosphonates import. Responsible for energy coupling to the transport system. The chain is Phosphonates import ATP-binding protein PhnC from Shigella flexneri serotype 5b (strain 8401).